The chain runs to 425 residues: Serine--tRNA ligase (425 aa).

Position 230 to 232 (230 to 232) interacts with L-serine; the sequence is TAE. Residue 261–263 coordinates ATP; the sequence is RSE. E284 contributes to the L-serine binding site. 348 to 351 contacts ATP; it reads EISS. S384 provides a ligand contact to L-serine.

It belongs to the class-II aminoacyl-tRNA synthetase family. Type-1 seryl-tRNA synthetase subfamily. As to quaternary structure, homodimer. The tRNA molecule binds across the dimer.

The protein localises to the cytoplasm. It catalyses the reaction tRNA(Ser) + L-serine + ATP = L-seryl-tRNA(Ser) + AMP + diphosphate + H(+). It carries out the reaction tRNA(Sec) + L-serine + ATP = L-seryl-tRNA(Sec) + AMP + diphosphate + H(+). It functions in the pathway aminoacyl-tRNA biosynthesis; selenocysteinyl-tRNA(Sec) biosynthesis; L-seryl-tRNA(Sec) from L-serine and tRNA(Sec): step 1/1. Its function is as follows. Catalyzes the attachment of serine to tRNA(Ser). Is also able to aminoacylate tRNA(Sec) with serine, to form the misacylated tRNA L-seryl-tRNA(Sec), which will be further converted into selenocysteinyl-tRNA(Sec). The chain is Serine--tRNA ligase from Nitratidesulfovibrio vulgaris (strain DSM 19637 / Miyazaki F) (Desulfovibrio vulgaris).